Consider the following 420-residue polypeptide: Sodium/proton antiporter 2 (420 aa).

The next 11 helical transmembrane spans lie at 25 to 45 (IALLMAVSLWVVRSIETSVEI), 60 to 80 (IVFYMLGAMTIVEIIDAHQGF), 94 to 114 (ILLWVIGFATFFLSSVLDNLT), 136 to 156 (LGAVVVIAANAGGAWTPIGDV), 173 to 193 (IKNLFLPSAISLVVPLALMSL), 221 to 241 (LVFGVGFGALLFVPLFKSLTG), 242 to 262 (LPPYMGILLGLGVIWILTDVI), 285 to 305 (GALFFLGILLSMSSLDAAGIL), 321 to 341 (LIASIIGVVSAIIDNVPLVAA), 363 to 383 (FCAGTGGSMLITGSAAGVIFM), and 400 to 420 (FAFAGFTAGIMTYLAVHNFPL).

The protein belongs to the NhaD Na(+)/H(+) (TC 2.A.62) antiporter family.

The protein resides in the membrane. Functionally, na(+)/H(+) antiporter that extrudes sodium in exchange for external protons. The protein is Sodium/proton antiporter 2 of Arabidopsis thaliana (Mouse-ear cress).